Here is a 497-residue protein sequence, read N- to C-terminus: NADH-quinone oxidoreductase subunit N (497 aa).

A run of 13 helical transmembrane segments spans residues methionine 12–leucine 32, proline 40–isoleucine 60, alanine 80–alanine 100, leucine 116–valine 136, valine 166–leucine 186, leucine 208–phenylalanine 228, proline 240–leucine 260, methionine 284–leucine 304, serine 316–isoleucine 336, methionine 341–valine 361, alanine 383–isoleucine 403, threonine 430–phenylalanine 450, and leucine 457–tryptophan 477.

The protein belongs to the complex I subunit 2 family. As to quaternary structure, NDH-1 is composed of 14 different subunits. Subunits NuoA, H, J, K, L, M, N constitute the membrane sector of the complex.

The protein localises to the cell membrane. The enzyme catalyses a quinone + NADH + 5 H(+)(in) = a quinol + NAD(+) + 4 H(+)(out). NDH-1 shuttles electrons from NADH, via FMN and iron-sulfur (Fe-S) centers, to quinones in the respiratory chain. The immediate electron acceptor for the enzyme in this species is believed to be a menaquinone. Couples the redox reaction to proton translocation (for every two electrons transferred, four hydrogen ions are translocated across the cytoplasmic membrane), and thus conserves the redox energy in a proton gradient. This chain is NADH-quinone oxidoreductase subunit N, found in Geobacillus kaustophilus (strain HTA426).